The primary structure comprises 424 residues: F-box protein At2g38590 (424 aa).

Positions 2-47 constitute an F-box domain; that stretch reads TTMISNLPRVLIEEIFFRVPLKSLRAVRLTCKSWNTLSKSRSFRKL.

The protein is F-box protein At2g38590 of Arabidopsis thaliana (Mouse-ear cress).